The primary structure comprises 483 residues: ATP synthase subunit beta (483 aa).

169-176 (GGAGVGKT) serves as a coordination point for ATP.

It belongs to the ATPase alpha/beta chains family. F-type ATPases have 2 components, CF(1) - the catalytic core - and CF(0) - the membrane proton channel. CF(1) has five subunits: alpha(3), beta(3), gamma(1), delta(1), epsilon(1). CF(0) has three main subunits: a(1), b(2) and c(9-12). The alpha and beta chains form an alternating ring which encloses part of the gamma chain. CF(1) is attached to CF(0) by a central stalk formed by the gamma and epsilon chains, while a peripheral stalk is formed by the delta and b chains.

Its subcellular location is the cell membrane. The enzyme catalyses ATP + H2O + 4 H(+)(in) = ADP + phosphate + 5 H(+)(out). Its function is as follows. Produces ATP from ADP in the presence of a proton gradient across the membrane. The catalytic sites are hosted primarily by the beta subunits. In Corynebacterium glutamicum (strain R), this protein is ATP synthase subunit beta.